We begin with the raw amino-acid sequence, 147 residues long: MDVLHAHDLYGEQLIDRVGDAVNEDAGDDLDTLVEGQQQQRLGVYRQMDILLDAPQEPPLGVFPAQGGPNGPPRLRKKRSFYTMTKPTPPCQSQEPEMCVLMASVTRAMRHVREDQRGEYFANYLVENMTSQNYPNGVGLPQHWGQL.

The disordered stretch occupies residues 57 to 76 (EPPLGVFPAQGGPNGPPRLR). N-linked (GlcNAc...) asparagine glycosylation is present at Asn128.

Belongs to the male-specific scotti family.

Post-meiotically transcribed gene that has a role in late spermiogenesis; required for actin cone progression during spermatid individualization. In Drosophila simulans (Fruit fly), this protein is Male-specific protein scotti.